We begin with the raw amino-acid sequence, 220 residues long: Cytidylate kinase (220 aa).

10-18 is an ATP binding site; the sequence is GPASSGKST.

The protein belongs to the cytidylate kinase family. Type 1 subfamily.

The protein localises to the cytoplasm. The enzyme catalyses CMP + ATP = CDP + ADP. It carries out the reaction dCMP + ATP = dCDP + ADP. The protein is Cytidylate kinase of Lactococcus lactis subsp. cremoris (strain SK11).